The following is a 578-amino-acid chain: Probable ATP-dependent RNA helicase DDX55 homolog (578 aa).

The short motif at 7 to 37 is the Q motif element; that stretch reads PVALKTFREKLGPELLEVFDKSYKSFTDVQV. Residues 40-218 enclose the Helicase ATP-binding domain; that stretch reads GTHLLNLSDV…VFGLRNAKQV (179 aa). 53-60 lines the ATP pocket; sequence SPTGSGKT. A DEAD box motif is present at residues 166–169; sequence DEAD. Residues 231–393 form the Helicase C-terminal domain; the sequence is TLKNYYVECR…EIKVPTNNSR (163 aa). The tract at residues 507 to 557 is disordered; sequence AAKDKKRREKEARKLKKMGGRFRNGGGTGRKAEEKKALKRKAEEEDDAQND. Residues 510–526 show a composition bias toward basic residues; it reads DKKRREKEARKLKKMGG. Residues 536 to 549 show a composition bias toward basic and acidic residues; that stretch reads RKAEEKKALKRKAE.

Belongs to the DEAD box helicase family. DDX55/SPB4 subfamily.

The enzyme catalyses ATP + H2O = ADP + phosphate + H(+). Its function is as follows. Probable ATP-binding RNA helicase. This Caenorhabditis elegans protein is Probable ATP-dependent RNA helicase DDX55 homolog.